Reading from the N-terminus, the 516-residue chain is Putative F-box and FNIP repeat-containing protein L414 (516 aa).

The F-box domain occupies 4–49 (INDLNMDVILHLLTFLTDKNKLNFMMTCTHLYQFISCVKYNNFQLF). FNIP repeat units lie at residues 123-165 (FNHT…FGEN), 166-208 (FNKM…LMYS), 341-383 (YNPK…NFNG), 385-428 (YDNI…FGKL), and 429-470 (YNKP…FGYM).

In Acanthamoeba polyphaga (Amoeba), this protein is Putative F-box and FNIP repeat-containing protein L414.